Reading from the N-terminus, the 130-residue chain is Ribosome biogenesis inhibitor MINAS-60 (130 aa).

The segment at 61 to 130 (SKVQRIPTRP…RRRRPVTSSC (70 aa)) is disordered. Residues 109–130 (KGRRRRRRMRRRRRRRPVTSSC) are compositionally biased toward basic residues.

Interacts with 60S ribosome assembly factors GTPBP4 and MRTO4.

It localises to the nucleus. Its subcellular location is the nucleolus. Functionally, acts as a late-stage inhibitor of pre-60S ribosome assembly by preventing pre-60S ribosome export from nucleus. This is Ribosome biogenesis inhibitor MINAS-60 from Mus musculus (Mouse).